We begin with the raw amino-acid sequence, 376 residues long: Hydroxylysine kinase (376 aa).

D229 functions as the Proton acceptor in the catalytic mechanism.

The protein belongs to the aminoglycoside phosphotransferase family.

It is found in the cytoplasm. It carries out the reaction (5R)-5-hydroxy-L-lysine + GTP = (5R)-5-phosphooxy-L-lysine + GDP + H(+). Functionally, catalyzes the GTP-dependent phosphorylation of 5-hydroxy-L-lysine. This is Hydroxylysine kinase (Hykk) from Mus musculus (Mouse).